The chain runs to 3218 residues: Serine/threonine-protein kinase Smg1 (3218 aa).

Positions 32–78 (LNNNGNHGDSSNEGGGGNGSGRGGATGSGNIAGLGGSESMWSPGGGK) are disordered. A compositionally biased stretch (low complexity) spans 33-43 (NNNGNHGDSSN). The span at 44–67 (EGGGGNGSGRGGATGSGNIAGLGG) shows a compositional bias: gly residues. Ser70 bears the Phosphoserine mark. The FAT domain maps to 1289–1692 (DAAAAAREEG…IFPAVVGANR (404 aa)). The stretch at 1643 to 1678 (APWKVIIPQLFSRLNHHEPYVRKSVCDLLCRLAKSR) is one HEAT repeat. In terms of domain architecture, PI3K/PI4K catalytic spans 1897–2232 (VESSVCVLPT…LGVGDLKYHK (336 aa)). A G-loop region spans residues 1903–1909 (VLPTKTK). The interval 2101-2109 (GLGDRHLDN) is catalytic loop. Residues 2121–2145 (HIDYNVCFEKGRTLRIPEKVPFRLT) are activation loop. Residues 3186–3218 (QRSTVAEQVDYVIREACNPENLAVLYEGWTPWV) enclose the FATC domain.

The protein belongs to the PI3/PI4-kinase family. In terms of assembly, component of a post-splicing multiprotein NMD complex. Mn(2+) is required as a cofactor.

It is found in the cytoplasm. The catalysed reaction is L-seryl-[protein] + ATP = O-phospho-L-seryl-[protein] + ADP + H(+). It catalyses the reaction L-threonyl-[protein] + ATP = O-phospho-L-threonyl-[protein] + ADP + H(+). In terms of biological role, serine/threonine protein kinase involved in mRNA surveillance. Recognizes the substrate consensus sequence [ST]-Q. Involved in nonsense-mediated decay (NMD) of mRNAs containing premature stop codons, probably by phosphorylating Upf1. This Drosophila melanogaster (Fruit fly) protein is Serine/threonine-protein kinase Smg1 (nonC).